A 340-amino-acid polypeptide reads, in one-letter code: Anthranilate phosphoribosyltransferase (340 aa).

Residues glycine 84, 87–88, threonine 92, 94–97, 112–120, and serine 124 each bind 5-phospho-alpha-D-ribose 1-diphosphate; these read GD, NIST, and KHGSRSVSS. Glycine 84 provides a ligand contact to anthranilate. A Mg(2+)-binding site is contributed by serine 96. Arginine 170 lines the anthranilate pocket. Mg(2+) is bound by residues aspartate 228 and glutamate 229.

The protein belongs to the anthranilate phosphoribosyltransferase family. Homodimer. It depends on Mg(2+) as a cofactor.

The catalysed reaction is N-(5-phospho-beta-D-ribosyl)anthranilate + diphosphate = 5-phospho-alpha-D-ribose 1-diphosphate + anthranilate. It functions in the pathway amino-acid biosynthesis; L-tryptophan biosynthesis; L-tryptophan from chorismate: step 2/5. Functionally, catalyzes the transfer of the phosphoribosyl group of 5-phosphorylribose-1-pyrophosphate (PRPP) to anthranilate to yield N-(5'-phosphoribosyl)-anthranilate (PRA). The protein is Anthranilate phosphoribosyltransferase of Psychromonas ingrahamii (strain DSM 17664 / CCUG 51855 / 37).